The primary structure comprises 797 residues: Outer membrane protein assembly factor BamA (797 aa).

Residues 1–19 (MKKLLIASLLFGTTTTVFA) form the signal peptide. POTRA domains follow at residues 22–89 (FVAK…VVAK), 90–170 (SIIS…INED), 173–259 (AKLA…VNEG), 262–341 (YDLR…VDAG), and 344–418 (LTVR…VKER).

It belongs to the BamA family. In terms of assembly, part of the Bam complex.

The protein resides in the cell outer membrane. In terms of biological role, part of the outer membrane protein assembly complex, which is involved in assembly and insertion of beta-barrel proteins into the outer membrane. The sequence is that of Outer membrane protein assembly factor BamA from Haemophilus influenzae.